Consider the following 787-residue polypeptide: Signal transducer and activator of transcription 5B (787 aa).

Phosphotyrosine is present on tyrosine 90. Serine 128 is subject to Phosphoserine. Positions tryptophan 589 to valine 686 constitute an SH2 domain. Phosphotyrosine is present on tyrosine 682. Tyrosine 699 is subject to Phosphotyrosine; by HCK, JAK and PTK6.

Belongs to the transcription factor STAT family. As to quaternary structure, upon activation, forms a homodimer or a heterodimer with a related family member. Binds NR3C1. Interacts with NCOA1. Interacts with NMI. Interacts with SOCS7. Interacts (via SH2 domain) with INSR. Interacts with CPEB3; this inhibits STAT5B-mediated transcriptional activation. Tyrosine phosphorylated in response to signaling via activated KIT, resulting in translocation to the nucleus. Tyrosine phosphorylated in response to signaling via activated FLT3; wild-type FLT3 results in much weaker phosphorylation than constitutively activated mutant FLT3. Alternatively, can be phosphorylated by JAK2. Phosphorylation at Tyr-699 by PTK6 or HCK leads to an increase of its transcriptional activity.

The protein localises to the cytoplasm. Its subcellular location is the nucleus. Functionally, carries out a dual function: signal transduction and activation of transcription. Mediates cellular responses to the cytokine KITLG/SCF and other growth factors. Binds to the GAS element and activates PRL-induced transcription. Positively regulates hematopoietic/erythroid differentiation. This is Signal transducer and activator of transcription 5B (STAT5B) from Sus scrofa (Pig).